The following is a 58-amino-acid chain: MSKTVVRKNESLDDALRRFKRSVTKAGTLQESRKREFYEKPSVKRKRKSEAARKRKKF.

The interval 36–58 is disordered; that stretch reads EFYEKPSVKRKRKSEAARKRKKF. Residues 43–58 show a composition bias toward basic residues; sequence VKRKRKSEAARKRKKF.

This sequence belongs to the bacterial ribosomal protein bS21 family.

The polypeptide is Small ribosomal subunit protein bS21 (Streptococcus uberis (strain ATCC BAA-854 / 0140J)).